A 1163-amino-acid polypeptide reads, in one-letter code: Carbamoyl phosphate synthase large chain (1163 aa).

Positions 1–456 are carboxyphosphate synthetic domain; it reads MPKRQDIKSI…SLQKALRGLE (456 aa). Residue R129 participates in ATP binding. The disordered stretch occupies residues 148-170; it reads LANATDIKDHDRKSHEAERSALK. The segment covering 153–170 has biased composition (basic and acidic residues); it reads DIKDHDRKSHEAERSALK. The ATP-grasp 1 domain maps to 185 to 381; the sequence is LENQWNLGEG…IAKIAAKLAV (197 aa). The ATP site is built by R222, G228, G229, E261, V263, E268, G294, V295, H296, Q338, and E352. The Mg(2+) site is built by Q338, E352, and N354. Mn(2+) contacts are provided by Q338, E352, and N354. The oligomerization domain stretch occupies residues 457–614; that stretch reads TGLTGLDEIE…PFVGAARSEA (158 aa). The carbamoyl phosphate synthetic domain stretch occupies residues 615–1026; sequence QVSDRKKVVI…AFAKSQLGAG (412 aa). Residues 743–955 enclose the ATP-grasp 2 domain; sequence QKLLMKLDLN…IAKIAARVMA (213 aa). The ATP site is built by R779, S839, L841, E846, G871, I872, H873, S874, Q914, and E926. 3 residues coordinate Mg(2+): Q914, E926, and N928. Q914, E926, and N928 together coordinate Mn(2+). Positions 1027–1163 constitute an MGS-like domain; sequence VDLPRDGTVF…VRPLQSYFET (137 aa). Positions 1027-1163 are allosteric domain; the sequence is VDLPRDGTVF…VRPLQSYFET (137 aa).

This sequence belongs to the CarB family. In terms of assembly, composed of two chains; the small (or glutamine) chain promotes the hydrolysis of glutamine to ammonia, which is used by the large (or ammonia) chain to synthesize carbamoyl phosphate. Tetramer of heterodimers (alpha,beta)4. Requires Mg(2+) as cofactor. It depends on Mn(2+) as a cofactor.

It catalyses the reaction hydrogencarbonate + L-glutamine + 2 ATP + H2O = carbamoyl phosphate + L-glutamate + 2 ADP + phosphate + 2 H(+). It carries out the reaction hydrogencarbonate + NH4(+) + 2 ATP = carbamoyl phosphate + 2 ADP + phosphate + 2 H(+). Its pathway is amino-acid biosynthesis; L-arginine biosynthesis; carbamoyl phosphate from bicarbonate: step 1/1. The protein operates within pyrimidine metabolism; UMP biosynthesis via de novo pathway; (S)-dihydroorotate from bicarbonate: step 1/3. Large subunit of the glutamine-dependent carbamoyl phosphate synthetase (CPSase). CPSase catalyzes the formation of carbamoyl phosphate from the ammonia moiety of glutamine, carbonate, and phosphate donated by ATP, constituting the first step of 2 biosynthetic pathways, one leading to arginine and/or urea and the other to pyrimidine nucleotides. The large subunit (synthetase) binds the substrates ammonia (free or transferred from glutamine from the small subunit), hydrogencarbonate and ATP and carries out an ATP-coupled ligase reaction, activating hydrogencarbonate by forming carboxy phosphate which reacts with ammonia to form carbamoyl phosphate. This is Carbamoyl phosphate synthase large chain from Rhizobium meliloti (strain 1021) (Ensifer meliloti).